Here is a 527-residue protein sequence, read N- to C-terminus: Bromodomain-containing protein 9 (527 aa).

Residues 1 to 16 are compositionally biased toward basic residues; it reads MNVSVTKRRKKKKKKK. The segment at 1–54 is disordered; that stretch reads MNVSVTKRRKKKKKKKSEKEKDKYLDEDERRRRKEEKKRKREKEQCDSEGETEV. The span at 17–30 shows a compositional bias: basic and acidic residues; sequence SEKEKDKYLDEDER. A compositionally biased stretch (basic residues) spans 31-41; the sequence is RRRKEEKKRKR. The Bromo domain maps to 78–182; sequence NESTPLQQLL…HTGFKMMSKA (105 aa). A histone H4K5ac H4K8ac and histone H4K5bu H4K8bu binding region spans residues 156 to 158; that stretch reads TYN. Over residues 468–478 the composition is skewed to basic and acidic residues; sequence DFHDVHNDRGG. The disordered stretch occupies residues 468–527; sequence DFHDVHNDRGGSRPSSSSSMSNNSERDHHLGSPSRISVGEQQDIHDPYEFLQSPETDNQN. Residues 479-490 show a composition bias toward low complexity; the sequence is SRPSSSSSMSNN.

As to quaternary structure, binds acetylated histones H3 and H4. Binds butyrylated histone H4.

It localises to the nucleus. In terms of biological role, plays a role in chromatin remodeling and regulation of transcription. Acts as a chromatin reader that recognizes and binds acylated histones: binds histones that are acetylated and/or butyrylated. This Xenopus laevis (African clawed frog) protein is Bromodomain-containing protein 9 (brd9).